Reading from the N-terminus, the 353-residue chain is Nicotinate-nucleotide--dimethylbenzimidazole phosphoribosyltransferase (353 aa).

The active-site Proton acceptor is the E318.

It belongs to the CobT family.

The enzyme catalyses 5,6-dimethylbenzimidazole + nicotinate beta-D-ribonucleotide = alpha-ribazole 5'-phosphate + nicotinate + H(+). It functions in the pathway nucleoside biosynthesis; alpha-ribazole biosynthesis; alpha-ribazole from 5,6-dimethylbenzimidazole: step 1/2. Functionally, catalyzes the synthesis of alpha-ribazole-5'-phosphate from nicotinate mononucleotide (NAMN) and 5,6-dimethylbenzimidazole (DMB). The protein is Nicotinate-nucleotide--dimethylbenzimidazole phosphoribosyltransferase of Desulforudis audaxviator (strain MP104C).